We begin with the raw amino-acid sequence, 159 residues long: SsrA-binding protein (159 aa).

Belongs to the SmpB family.

It is found in the cytoplasm. In terms of biological role, required for rescue of stalled ribosomes mediated by trans-translation. Binds to transfer-messenger RNA (tmRNA), required for stable association of tmRNA with ribosomes. tmRNA and SmpB together mimic tRNA shape, replacing the anticodon stem-loop with SmpB. tmRNA is encoded by the ssrA gene; the 2 termini fold to resemble tRNA(Ala) and it encodes a 'tag peptide', a short internal open reading frame. During trans-translation Ala-aminoacylated tmRNA acts like a tRNA, entering the A-site of stalled ribosomes, displacing the stalled mRNA. The ribosome then switches to translate the ORF on the tmRNA; the nascent peptide is terminated with the 'tag peptide' encoded by the tmRNA and targeted for degradation. The ribosome is freed to recommence translation, which seems to be the essential function of trans-translation. This chain is SsrA-binding protein, found in Frankia casuarinae (strain DSM 45818 / CECT 9043 / HFP020203 / CcI3).